A 266-amino-acid polypeptide reads, in one-letter code: Translation initiation factor 2 subunit alpha (266 aa).

In terms of domain architecture, S1 motif spans 12–83 (GEILIATVKQ…RKGTVDVSLK (72 aa)).

The protein belongs to the eIF-2-alpha family. As to quaternary structure, heterotrimer composed of an alpha, a beta and a gamma chain.

EIF-2 functions in the early steps of protein synthesis by forming a ternary complex with GTP and initiator tRNA. The sequence is that of Translation initiation factor 2 subunit alpha from Saccharolobus islandicus (strain Y.N.15.51 / Yellowstone #2) (Sulfolobus islandicus).